Reading from the N-terminus, the 321-residue chain is Queuosine 5'-phosphate N-glycosylase/hydrolase (321 aa).

Residues Phe227, Asp229, and Asp296 each coordinate queuine. Catalysis depends on Asp229, which acts as the Nucleophile or transition state stabilizer.

Belongs to the QNG1 protein family.

The catalysed reaction is queuosine 5'-phosphate + H2O = queuine + D-ribose 5-phosphate. In terms of biological role, catalyzes the hydrolysis of queuosine 5'-phosphate, releasing the nucleobase queuine (q). Is required for salvage of queuine from exogenous queuosine (Q) that is imported and then converted to queuosine 5'-phosphate intracellularly. This chain is Queuosine 5'-phosphate N-glycosylase/hydrolase, found in Dictyostelium discoideum (Social amoeba).